The chain runs to 268 residues: Ribosomal RNA small subunit methyltransferase A (268 aa).

S-adenosyl-L-methionine is bound by residues N16, L18, G43, E64, D89, and N110.

It belongs to the class I-like SAM-binding methyltransferase superfamily. rRNA adenine N(6)-methyltransferase family. RsmA subfamily.

The protein resides in the cytoplasm. It catalyses the reaction adenosine(1518)/adenosine(1519) in 16S rRNA + 4 S-adenosyl-L-methionine = N(6)-dimethyladenosine(1518)/N(6)-dimethyladenosine(1519) in 16S rRNA + 4 S-adenosyl-L-homocysteine + 4 H(+). In terms of biological role, specifically dimethylates two adjacent adenosines (A1518 and A1519) in the loop of a conserved hairpin near the 3'-end of 16S rRNA in the 30S particle. May play a critical role in biogenesis of 30S subunits. This chain is Ribosomal RNA small subunit methyltransferase A, found in Pseudomonas syringae pv. syringae (strain B728a).